Reading from the N-terminus, the 263-residue chain is Putative inactive caspase B (263 aa).

A propeptide spans 1-8 (MMCEDASD) (removed in mature form by cps-1 or ced-3).

The protein belongs to the peptidase C14A family. In terms of assembly, interacts with ced-3 (via large subunit p17 or small subunit p13); the interaction inhibits ced-3 autoactivation. In terms of processing, cleavage by csp-1 isoform b or ced-3 removes the propeptide and generates subunit p31 in vitro. An additional cleavage at Asp-149 generates the 2 subunits p17 and p14 but this cleavage appears to be less efficient. Specifically expressed in the hermaphrodite germline.

The protein localises to the cytoplasm. Putative inactive caspase. In the germline, binds caspase ced-3 zymogen and prevents ced-3 autoactivation. Does not affect the caspase activity of mature ced-3 and ced-4-mediated mature ced-3 activation. Negatively regulates germline apoptosis by inhibiting autocleavage of caspase ced-3. Involved in fertility. Its function is as follows. Putative inactive caspase. Dispensable for the inhibition of germline apoptosis. The polypeptide is Putative inactive caspase B (Caenorhabditis elegans).